A 201-amino-acid chain; its full sequence is Ras-related protein Rab-9B (201 aa).

GTP is bound by residues valine 18, glycine 19, lysine 20, serine 21, serine 22, aspartate 33, serine 34, alanine 36, histidine 38, and threonine 39. Serine 21 lines the Mg(2+) pocket. The short motif at 31 to 42 is the Switch 1 element; it reads KFDSQAFHTIGV. Serine 34 bears the Phosphoserine mark. Threonine 39 and aspartate 62 together coordinate Mg(2+). The Switch 2 signature appears at 64–78; sequence AGQERFKSLRTPFYR. 5 residues coordinate GTP: glycine 65, asparagine 124, lysine 125, alanine 155, and lysine 156. Residues cysteine 200 and cysteine 201 are each lipidated (S-geranylgeranyl cysteine).

This sequence belongs to the small GTPase superfamily. Rab family. Interacts (GTP-bound form) with SGSM1; the GDP-bound form has much lower affinity for SGSM1. The GTP-bound form but not the GDP-bound form interacts with HPS4 and the BLOC-3 complex (heterodimer of HPS1 and HPS4) but does not interact with HPS1 alone. Interacts (GTP-bound form) with NDE1. It depends on Mg(2+) as a cofactor.

It localises to the cell membrane. The protein localises to the cytoplasmic vesicle. It is found in the phagosome membrane. It carries out the reaction GTP + H2O = GDP + phosphate + H(+). Its activity is regulated as follows. Regulated by guanine nucleotide exchange factors (GEFs) which promote the exchange of bound GDP for free GTP. Regulated by GTPase activating proteins (GAPs) which increase the GTP hydrolysis activity. Inhibited by GDP dissociation inhibitors (GDIs). Its function is as follows. The small GTPases Rab are key regulators of intracellular membrane trafficking, from the formation of transport vesicles to their fusion with membranes. Rabs cycle between an inactive GDP-bound form and an active GTP-bound form that is able to recruit to membranes different sets of downstream effectors directly responsible for vesicle formation, movement, tethering and fusion. RAB9B is involved in the transport of proteins between the endosomes and the trans Golgi network. May use NDE1/NDEL1 as an effector to interact with the dynein motor complex in order to control retrograde trafficking of RAB9-associated late endosomes to the TGN. This Mus musculus (Mouse) protein is Ras-related protein Rab-9B.